The following is a 380-amino-acid chain: Alcohol dehydrogenase 2 (380 aa).

Zn(2+) contacts are provided by cysteine 48, threonine 50, histidine 70, cysteine 100, cysteine 103, cysteine 106, cysteine 114, and cysteine 178. Residues threonine 50 and histidine 70 each contribute to the an alcohol site. Threonine 50 lines the NAD(+) pocket. NAD(+) contacts are provided by residues glycine 203–glycine 208, aspartate 227, arginine 232, threonine 273, valine 296, valine 296–valine 298, phenylalanine 323, and arginine 373.

Belongs to the zinc-containing alcohol dehydrogenase family. In terms of assembly, homodimer. Homotetramer. Requires Zn(2+) as cofactor.

The protein resides in the cytoplasm. The catalysed reaction is a primary alcohol + NAD(+) = an aldehyde + NADH + H(+). The enzyme catalyses a secondary alcohol + NAD(+) = a ketone + NADH + H(+). The chain is Alcohol dehydrogenase 2 (ADH2) from Solanum lycopersicum (Tomato).